The primary structure comprises 300 residues: 2-dehydropantoate 2-reductase (300 aa).

NADP(+) contacts are provided by residues 7 to 12 (GAGAIG), Lys-74, Asn-99, and Ala-123. The active-site Proton donor is Lys-179. Substrate-binding positions include Lys-179, Asn-183, Asn-187, Asn-197, and 246 to 249 (NYNS). Glu-261 provides a ligand contact to NADP(+).

It belongs to the ketopantoate reductase family.

It localises to the cytoplasm. It catalyses the reaction (R)-pantoate + NAD(+) = 2-dehydropantoate + NADH + H(+). The catalysed reaction is (R)-pantoate + NADP(+) = 2-dehydropantoate + NADPH + H(+). It functions in the pathway cofactor biosynthesis; coenzyme A biosynthesis. Catalyzes the NAD(P)H-dependent reduction of ketopantoate into pantoic acid. The chain is 2-dehydropantoate 2-reductase (apbA) from Pyrococcus abyssi (strain GE5 / Orsay).